The following is a 330-amino-acid chain: Aspartate--ammonia ligase (330 aa).

This sequence belongs to the class-II aminoacyl-tRNA synthetase family. AsnA subfamily.

It is found in the cytoplasm. It carries out the reaction L-aspartate + NH4(+) + ATP = L-asparagine + AMP + diphosphate + H(+). It participates in amino-acid biosynthesis; L-asparagine biosynthesis; L-asparagine from L-aspartate (ammonia route): step 1/1. In Treponema pallidum (strain Nichols), this protein is Aspartate--ammonia ligase.